A 327-amino-acid chain; its full sequence is Movement protein (327 aa).

Positions 297 to 327 (SASSSNTENELARVSQNIDLLKNKLKEICGE) form a coiled coil.

This sequence belongs to the caulimoviridae movement protein family. In terms of assembly, homotrimer, through the coiled-coil domain. Interacts with VAP. May interact (via N-terminus) with host prenylated Rab acceptor protein 1D (PRA1D).

The protein localises to the host cell junction. Its subcellular location is the host plasmodesma. Transports viral genome to neighboring plant cells directly through plasmosdesmata, without any budding. The movement protein allows efficient cell to cell propagation, by bypassing the host cell wall barrier. Acts by forming tubules structures that increase the size exclusion limit (SEL) of plasmodesmata, thereby allowing viral ribonucleocapsids to spread directly to neighboring cells. The polypeptide is Movement protein (Cauliflower mosaic virus (strain Strasbourg) (CaMV)).